A 60-amino-acid chain; its full sequence is UI (60 aa).

Over residues Ala1–Gly14 the composition is skewed to low complexity. Positions Ala1 to Asp22 are disordered. A Valine amide modification is found at Val60.

Belongs to the sauvagine/corticotropin-releasing factor/urotensin I family.

The protein resides in the secreted. Urotensin is found in the teleost caudal neurosecretory system. It has a suggested role in osmoregulation and as a corticotropin-releasing factor. The non-hormonal portion of this precursor may be a urotensin binding protein, urophysin. The sequence is that of UI from Platichthys flesus (European flounder).